We begin with the raw amino-acid sequence, 330 residues long: MSTTINRNEKTKQVVNKTKEIKTESSQQQQQKPPISKLMGIILATRPWSLTISVTSVLVGSALAFREIREFDSIMLSIILVGAVSLQALGNVVNSFYDCKNGNDTKEKSADRTMFDFGLTEGNIINLIWYLLIQCAICLGLMIFRMDNIKCIVENILPLGAFGFILNISYTAAPIGLKYIGLGDLTIFLCFGPILVQSAFISQTHYHDSLAYFYSIPLALTIVAVLHVNNTRDIKADTEAGSITLASKLGFKNCYYIYAGLYLFAYIYLFKLSLDIDKYILNLPLILIPKIISLINQFKNKKLEDLTEKTGQLSFFFGGLNAIGVLLSMQ.

The next 9 membrane-spanning stretches (helical) occupy residues 39-59 (MGII…SVLV), 73-93 (SIML…GNVV), 124-144 (IINL…LMIF), 156-176 (ILPL…APIG), 180-200 (IGLG…QSAF), 209-229 (SLAY…LHVN), 254-274 (CYYI…KLSL), 276-296 (IDKY…SLIN), and 310-330 (TGQL…LSMQ).

This sequence belongs to the UbiA prenyltransferase family.

The protein resides in the endoplasmic reticulum membrane. It is found in the golgi apparatus membrane. The catalysed reaction is menadiol + (2E,6E,10E)-geranylgeranyl diphosphate = menaquinol-4 + diphosphate. The protein operates within quinol/quinone metabolism; menaquinone biosynthesis. Functionally, prenyltransferase that mediates the formation of menaquinone-4 (MK-4), a vitamin K2 isoform. This Dictyostelium discoideum (Social amoeba) protein is UbiA prenyltransferase domain-containing protein 1 (ubiad1).